A 375-amino-acid polypeptide reads, in one-letter code: Outer membrane porin OmpD (375 aa).

A signal peptide spans 1 to 34 (MRKHAKKIIRIIKMKLKLVAVAVTSLLAAGVVNA).

The protein belongs to the Gram-negative porin family. In terms of assembly, homotrimer. Mixed heterotrimers with other porins are also probable.

It localises to the cell outer membrane. Forms pores that allow passive diffusion of small molecules across the outer membrane. This chain is Outer membrane porin OmpD, found in Salmonella typhimurium (strain SL1344).